The sequence spans 248 residues: NADP-dependent 3-hydroxy acid dehydrogenase YdfG (248 aa).

Residues 7–12 (GATAGF), 32–33 (RR), 54–55 (DV), and asparagine 81 contribute to the NADP(+) site. Serine 134 provides a ligand contact to substrate. Residues tyrosine 147, lysine 151, and 177–185 (PGLVGGTEF) each bind NADP(+). The active-site Proton acceptor is the tyrosine 147.

The protein belongs to the short-chain dehydrogenases/reductases (SDR) family. In terms of assembly, homotetramer.

The catalysed reaction is 3-hydroxypropanoate + NADP(+) = 3-oxopropanoate + NADPH + H(+). It catalyses the reaction L-allo-threonine + NADP(+) = aminoacetone + CO2 + NADPH. Functionally, NADP-dependent dehydrogenase with broad substrate specificity acting on 3-hydroxy acids. Catalyzes the NADP-dependent oxidation of L-allo-threonine to L-2-amino-3-keto-butyrate, which is spontaneously decarboxylated into aminoacetone. Also acts on D-threonine, L-serine, D-serine, D-3-hydroxyisobutyrate, L-3-hydroxyisobutyrate, D-glycerate and L-glycerate. Able to catalyze the reduction of the malonic semialdehyde to 3-hydroxypropionic acid. YdfG is apparently supplementing RutE, the presumed malonic semialdehyde reductase involved in pyrimidine degradation since both are able to detoxify malonic semialdehyde. The protein is NADP-dependent 3-hydroxy acid dehydrogenase YdfG of Shigella flexneri.